Reading from the N-terminus, the 394-residue chain is C-19 steroid 1alpha-hydroxylase (394 aa).

Residues His81, Arg85, Arg281, Gly335, His338, and Cys340 each contribute to the heme b site.

Belongs to the cytochrome P450 family. The cofactor is heme b.

It catalyses the reaction testosterone + 2 reduced [2Fe-2S]-[ferredoxin] + O2 + 2 H(+) = 1alpha-hydroxytestosterone + 2 oxidized [2Fe-2S]-[ferredoxin] + H2O. The catalysed reaction is androst-4-ene-3,17-dione + 2 reduced [2Fe-2S]-[ferredoxin] + O2 + 2 H(+) = 1alpha-hydroxyandrost-4-ene-3,17-dione + 2 oxidized [2Fe-2S]-[ferredoxin] + H2O. Hydroxylase that can catalyze the in vitro conversion of the sesquiterpenoid nootkatone, a natural organic compound produced by some plants, to at least five hydrophilic products. The native ferredoxin reductase FdR_B and either Fdx2 or Fdx8 ferredoxins can act as the redox partners for the conversion of nootkatone. Functionally, in addition, acts as a steroid 1alpha-hydroxylase, when associated in vitro with the surrogate redox partners bovine adrenodoxin (Adx) and adrenodoxin reductase (Adr). Acts on several C-19 steroid substrates, including testosterone and androstenedione, which are hydroxylated to 1alpha-hydroxytestosterone and 1alpha-hydroxyandrostenedione, respectively. Can use their derivatives testosterone-acetate and 11-oxoandrostenedione, but not vitamin D3 and 25-hydroxyvitamin D3. Also catalyzes the hydroxylation of the C-21 steroid 11-deoxycorticosterone to 1alpha-hydroxy-11-deoxycorticosterone. Catalyzes the hydroxylation of the C-21 steroid progesterone, leading to the formation of seven products: two major (1alpha-hydroxyprogesterone and 17alpha-hydroxyprogesterone) and five minor products. This is C-19 steroid 1alpha-hydroxylase from Sorangium cellulosum (strain So ce56) (Polyangium cellulosum (strain So ce56)).